Consider the following 282-residue polypeptide: uncharacterized protein (282 aa).

This sequence belongs to the ycf80 family.

It is found in the plastid. The protein localises to the chloroplast. This is an uncharacterized protein from Guillardia theta (Cryptophyte).